Consider the following 918-residue polypeptide: Aconitase-ribosomal protein bL21m fusion protein (918 aa).

The N-terminal 30 residues, Met1–Phe30, are a transit peptide targeting the mitochondrion. The tract at residues Gln31–His811 is homocitrate dehydratase, mitochondrial. Residues Gln105 and Asp198 to His200 each bind substrate. [4Fe-4S] cluster contacts are provided by Cys394, Cys457, and Cys460. Substrate-binding positions include Arg484, Arg489, Lys619, and Ala680–Arg681. The tract at residues Tyr812–Asn918 is large ribosomal subunit protein bL21m.

This sequence in the N-terminal section; belongs to the aconitase/IPM isomerase family. The protein in the C-terminal section; belongs to the bacterial ribosomal protein bL21 family. As to quaternary structure, component of the mitochondrial large ribosomal subunit (mt-LSU). Mature yeast 74S mitochondrial ribosomes consist of a small (37S) and a large (54S) subunit. The 37S small subunit contains a 15S ribosomal RNA (15S mt-rRNA) and at least 32 different proteins. The 54S large subunit contains a 21S rRNA (21S mt-rRNA) and at least 45 different proteins. Requires [4Fe-4S] cluster as cofactor.

Its subcellular location is the mitochondrion. The protein localises to the nucleus. It catalyses the reaction (2R)-homocitrate = cis-homoaconitate + H2O. The protein operates within amino-acid biosynthesis; L-lysine biosynthesis via AAA pathway; L-alpha-aminoadipate from 2-oxoglutarate: step 2/5. In terms of biological role, catalyzes the reversible dehydration of (R)-homocitrate to cis-homoaconitate, a step in the alpha-aminoadipate pathway for lysine biosynthesis. Functionally, component of the mitochondrial ribosome (mitoribosome), a dedicated translation machinery responsible for the synthesis of mitochondrial genome-encoded proteins, including at least some of the essential transmembrane subunits of the mitochondrial respiratory chain. The mitoribosomes are attached to the mitochondrial inner membrane and translation products are cotranslationally integrated into the membrane. In Schizosaccharomyces pombe (strain 972 / ATCC 24843) (Fission yeast), this protein is Aconitase-ribosomal protein bL21m fusion protein (aco2).